Here is a 78-residue protein sequence, read N- to C-terminus: Large ribosomal subunit protein bL28 (78 aa).

The tract at residues 1–23 (MSRVCQVTGKKPMVGNNRSHAKN) is disordered.

The protein belongs to the bacterial ribosomal protein bL28 family.

This chain is Large ribosomal subunit protein bL28, found in Shewanella sediminis (strain HAW-EB3).